The chain runs to 88 residues: Small ribosomal subunit protein bS20 (88 aa).

The protein belongs to the bacterial ribosomal protein bS20 family.

Functionally, binds directly to 16S ribosomal RNA. This is Small ribosomal subunit protein bS20 from Bacillus licheniformis (strain ATCC 14580 / DSM 13 / JCM 2505 / CCUG 7422 / NBRC 12200 / NCIMB 9375 / NCTC 10341 / NRRL NRS-1264 / Gibson 46).